A 480-amino-acid chain; its full sequence is Altronate oxidoreductase (480 aa).

Residue 19-30 (ILQFGEGNFLRG) participates in NAD(+) binding.

Belongs to the mannitol dehydrogenase family. UxaB subfamily.

It catalyses the reaction D-altronate + NAD(+) = keto-D-tagaturonate + NADH + H(+). It participates in carbohydrate metabolism; pentose and glucuronate interconversion. The chain is Altronate oxidoreductase from Bacillus subtilis (strain 168).